The primary structure comprises 801 residues: MPEPILHSKFLSGLPAGRKNGVRHGEKPEKVGEKQFDFTRKIRELRLELEIKKREEERIEKDIAIILEENTIDGGEQNRSFGLAVTRLNNHMLVVENSAKQLTSALKNISVLADTISGRVSALDVAKTRVVGCLQLAGDMRDLGVCAEGIDDAIRSEDFETASQHIHRFLTLDQAVFQIREFKQKDATDSIRHSYEVLSSAKERLSKILKSRLTESVQKGDVAEMQRFIKMFPLIHEPDEGLQRYSVFLNQKIDKLAEDNLAIMKAGGTDDNRRNVLYADTLFMFFEGVAEIIESNLPVLEHSYGLEKLLDFMFILQARIDEFFRRLHEEFDTRRRLSHFNRLVDDVIHQKKAAEAVEDAPDPMEIDAIASEICMMNTSAEMYWRFVSRRIGKNEVIRSPSGDGDDEENEEARQERHRLRKEAKEQKMDQLLNRSRVGTKMQELIGNYCLLEHFYMLKSVQKAIKSDVKEDAGGLTSSIVDDVVFIIRKSIRRAAGSGNVDSVCATINNATALIDTVVHGHLRQSIQQGYVTSSNFASEAFTAYQQGKPVKEAADAQKEQFLLALNNSAKLSELLIELQKGLITEWAGVKRPDVEKNKLEHSTTQIEESAKKLASLAKHGVEELFKSAFKNKIKQGADPYQEIDRQMTMQDVEYYEAHDPFMEQFLAQIDRLLVENEPLLFADNYQTLLLLTSSEIARQIEQSLAKCQFNRYGALQLDREYRQICAYLTNVAGWSAREKVGRLGQIVSLLNVETIDEAMEVWHNSKAMTSSATIRTLTLPEVRKVLALRADFPTVAIKSIE.

The segment at 397 to 427 (IRSPSGDGDDEENEEARQERHRLRKEAKEQK) is disordered.

It belongs to the COG4 family. Component of the conserved oligomeric Golgi complex which is composed of eight different subunits and is required for normal Golgi morphology and localization.

It is found in the golgi apparatus membrane. In terms of biological role, required for normal Golgi function. The polypeptide is Conserved oligomeric Golgi complex subunit 4 (cogc-4) (Caenorhabditis elegans).